The sequence spans 561 residues: Arginine--tRNA ligase (561 aa).

The 'HIGH' region signature appears at 129 to 139 (ANPTGPLHVGH).

The protein belongs to the class-I aminoacyl-tRNA synthetase family. As to quaternary structure, monomer.

The protein localises to the cytoplasm. It catalyses the reaction tRNA(Arg) + L-arginine + ATP = L-arginyl-tRNA(Arg) + AMP + diphosphate. The sequence is that of Arginine--tRNA ligase from Polaromonas sp. (strain JS666 / ATCC BAA-500).